The following is a 34-amino-acid chain: Cycloamanide B proprotein (34 aa).

A propeptide spanning residues 1–10 (MSDINAARLP) is cleaved from the precursor. Positions 11 to 17 (SFFFPIP) form a cross-link, cyclopeptide (Ser-Pro). Residues 18–34 (CISDDIEMVLTRGESLC) constitute a propeptide that is removed on maturation.

Belongs to the MSDIN fungal toxin family. Post-translationally, processed by the macrocyclase-peptidase enzyme POPB to yield a cyclic decapeptide. POPB first removes 10 residues from the N-terminus. Conformational trapping of the remaining peptide forces the enzyme to release this intermediate rather than proceed to macrocyclization. The enzyme rebinds the remaining peptide in a different conformation and catalyzes macrocyclization of the N-terminal 7 residues.

In terms of biological role, cyclic heptapeptide that belongs to the MSDIN-like toxin family responsible for a large number of food poisoning cases and deaths. Cycloaminide B is non-toxic to mammals but shows immunosuppressive activity, probably through the inhibition of the action of interleukin-1 and interleukin-2. In Amanita phalloides (Death cap), this protein is Cycloamanide B proprotein.